We begin with the raw amino-acid sequence, 319 residues long: MNLEIMQNSLVNFAFGGLLIAMLVYWISLAFPGIGGLNRLATLITLLVNIALTLTLSSRWFANGYFPLSNLYESLLFLAWGLTFVHLFIENKTKSRLIGATAIPVAMFVTAFASLALPLEMQKASPLVPALKSNWLMMHVSIMMLSYAILILGSLLSILFLIITKGKDINLKGSSIGTGSYKVKNTDAKSTLIFSSQVGIVQEQSNMLINSTRMNLLESIDNLSYRTIGLGFPLLTIGIIAGAVWANEAWGSYWSWDPKETWALITWLIFAAYLHSRITKSWQGKKPAILASLGFLVVWICYLGVNFLGKGLHSYGWLA.

Helical transmembrane passes span 14-34 (AFGG…FPGI), 36-56 (GLNR…TLTL), 69-89 (SNLY…HLFI), 97-117 (LIGA…SLAL), 142-162 (IMML…LFLI), 227-247 (TIGL…VWAN), 254-274 (WSWD…AAYL), and 288-308 (AILA…VNFL).

It belongs to the CcmF/CycK/Ccl1/NrfE/CcsA family. As to quaternary structure, may interact with Ccs1.

The protein localises to the plastid. It is found in the chloroplast thylakoid membrane. In terms of biological role, required during biogenesis of c-type cytochromes (cytochrome c6 and cytochrome f) at the step of heme attachment. This is Cytochrome c biogenesis protein CcsA from Pyropia yezoensis (Susabi-nori).